We begin with the raw amino-acid sequence, 529 residues long: uncharacterized protein (529 aa).

ATP-binding positions include 178–186 (TSGTTGQPK), aspartate 401, arginine 416, and lysine 510.

This sequence belongs to the ATP-dependent AMP-binding enzyme family.

This is an uncharacterized protein from Bacillus subtilis (strain 168).